Here is a 683-residue protein sequence, read N- to C-terminus: U4/U6 small nuclear ribonucleoprotein Prp3 (683 aa).

Positions 1–87 constitute a PWI domain; that stretch reads MALSKRELDE…HSKSSSDRSR (87 aa). Over residues 73–107 the composition is skewed to basic and acidic residues; it reads GRSSRHSKSSSDRSRKRELKEVFGDDSEISKESSG. The segment at 73-135 is disordered; sequence GRSSRHSKSS…IPGPPSESPG (63 aa). Residue lysine 139 forms a Glycyl lysine isopeptide (Lys-Gly) (interchain with G-Cter in SUMO2) linkage. A disordered region spans residues 161–183; sequence SFISPPAPQPKTPSSSQPERLPI. Serine 164 is subject to Phosphoserine. Residues lysine 244 and lysine 252 each participate in a glycyl lysine isopeptide (Lys-Gly) (interchain with G-Cter in SUMO2) cross-link. Residues 416-550 form a mediates interaction with SART3 region; that stretch reads NLVEHPAQLN…VHISVYRVRN (135 aa). Residue serine 619 is modified to Phosphoserine.

As to quaternary structure, component of the precatalytic spliceosome (spliceosome B complex). Component of the U4/U6-U5 tri-snRNP complex, a building block of the precatalytic spliceosome (spliceosome B complex). The U4/U6-U5 tri-snRNP complex is composed of the U4, U6 and U5 snRNAs and at least PRPF3, PRPF4, PRPF6, PRPF8, PRPF31, SNRNP200, TXNL4A, SNRNP40, SNRPB, SNRPD1, SNRPD2, SNRPD3, SNRPE, SNRPF, SNRPG, DDX23, CD2BP2, PPIH, SNU13, EFTUD2, SART1 and USP39, plus LSM2, LSM3, LSM4, LSM5, LSM6, LSM7 and LSM8. Interacts directly with PRPF4. Part of a heteromeric complex containing PPIH, PRPF3 and PRPF4 that is stable in the absence of RNA. Interacts with SART3; the interaction is direct and recruits the deubiquitinase USP4 to PRPF3. Interacts with PRPF19. Interacts ('Lys-63'-linked polyubiquitinated) with PRPF8 (via the MPN (JAB/Mov34) domain); may stabilize the U4/U6-U5 tri-snRNP complex. Interacts with ERCC6. Ubiquitinated. Undergoes 'Lys-63'-linked polyubiquitination by PRPF19 and deubiquitination by USP4. 'Lys-63'-linked ubiquitination increases the affinity for PRPF8 and may regulate the assembly of the U4/U6-U5 tri-snRNP complex.

It is found in the nucleus. It localises to the nucleus speckle. In terms of biological role, plays a role in pre-mRNA splicing as component of the U4/U6-U5 tri-snRNP complex that is involved in spliceosome assembly, and as component of the precatalytic spliceosome (spliceosome B complex). The sequence is that of U4/U6 small nuclear ribonucleoprotein Prp3 (Prpf3) from Mus musculus (Mouse).